The following is a 211-amino-acid chain: MTIGVVGRKCGMTRIFTEEGVSIPVTVIEIEPNRVTQFKTEETDGYRAVQVTVGERRASRVTAAQAGHFAKANVAAGRTVMEFRLEEGDYQAGDQINAEIFAAGQLVDVTGQSKGKGFQGTIKRWNFRGQDNTHGNSVSHRVPGSIGQCQTPGRVFKGKKMSGHMGAERVTVQSLELVRVDAERNLLLVKGAVPGATGGNLVVRPAAKARG.

Position 150 is an N5-methylglutamine (Gln150).

This sequence belongs to the universal ribosomal protein uL3 family. As to quaternary structure, part of the 50S ribosomal subunit. Forms a cluster with proteins L14 and L19. Post-translationally, methylated by PrmB.

Its function is as follows. One of the primary rRNA binding proteins, it binds directly near the 3'-end of the 23S rRNA, where it nucleates assembly of the 50S subunit. This chain is Large ribosomal subunit protein uL3, found in Pseudomonas savastanoi pv. phaseolicola (strain 1448A / Race 6) (Pseudomonas syringae pv. phaseolicola (strain 1448A / Race 6)).